We begin with the raw amino-acid sequence, 528 residues long: Putative pumilio homolog 10 (528 aa).

The region spanning 188–528 (EGSGASYPDE…KIFSKTILKK (341 aa)) is the PUM-HD domain. Pumilio repeat units lie at residues 213–248 (EIYG…VIFL), 249–284 (EIID…MIVS), 285–323 (VLTS…ALVK), 325–360 (ALEP…FVVE), 361–396 (AATE…RLVA), 397–433 (EISR…LPFR), 434–465 (THCI…EIVR), and 466–503 (ELLS…RLVE).

The protein localises to the cytoplasm. Sequence-specific RNA-binding protein that regulates translation and mRNA stability by binding the 3'-UTR of target mRNAs. The chain is Putative pumilio homolog 10 (APUM10) from Arabidopsis thaliana (Mouse-ear cress).